We begin with the raw amino-acid sequence, 594 residues long: UvrABC system protein C (594 aa).

Residues 14–91 (DQPGCYLMKD…IKKHDPKYNI (78 aa)) enclose the GIY-YIG domain. Residues 196–231 (KEVRSELETKMYEASEKLEFERAKELRDQIAHIDAI) enclose the UVR domain.

The protein belongs to the UvrC family. As to quaternary structure, interacts with UvrB in an incision complex.

The protein localises to the cytoplasm. The UvrABC repair system catalyzes the recognition and processing of DNA lesions. UvrC both incises the 5' and 3' sides of the lesion. The N-terminal half is responsible for the 3' incision and the C-terminal half is responsible for the 5' incision. The sequence is that of UvrABC system protein C from Bacillus thuringiensis (strain Al Hakam).